Here is a 198-residue protein sequence, read N- to C-terminus: MDAILNYKSEDTEDYYTLLGCDELSSVEQILAEFKVRALECHPDKHPENSKAVETFQKLQKAKDILTNEASRARYDHWRRSQMSMSFQQWEALSDSVKMSMHWAVRGKKDLMLEESDQTPTDKIENEEQDEQKEIKKEEFGSTTEKMEQKESKSVEKSFSPQNPDSPGFANVNCWHLRFRWSGDAPSELLRKFRNYEI.

Met-1 carries the post-translational modification N-acetylmethionine. The J domain maps to Asp-14–Arg-79. The segment at Met-112–Pro-167 is disordered. The span at Pro-120–Glu-156 shows a compositional bias: basic and acidic residues. Residues Ser-160, Ser-166, and Ser-182 each carry the phosphoserine modification.

Interacts with HSPA8. Interacts with TPH1. Interacts with TPH2.

It is found in the cytoplasm. Functionally, probable co-chaperone that participates in the proper folding of biopterin-dependent aromatic amino acid hydroxylases, which include phenylalanine-4-hydroxylase (PAH), tyrosine 3-monooxygenase (TH) and peripheral and neuronal tryptophan hydroxylases (TPH1 and TPH2). This chain is DnaJ homolog subfamily C member 12 (DNAJC12), found in Bos taurus (Bovine).